Here is a 458-residue protein sequence, read N- to C-terminus: Argininosuccinate lyase (458 aa).

Belongs to the lyase 1 family. Argininosuccinate lyase subfamily.

It is found in the cytoplasm. The catalysed reaction is 2-(N(omega)-L-arginino)succinate = fumarate + L-arginine. The protein operates within amino-acid biosynthesis; L-arginine biosynthesis; L-arginine from L-ornithine and carbamoyl phosphate: step 3/3. The sequence is that of Argininosuccinate lyase from Neisseria meningitidis serogroup C / serotype 2a (strain ATCC 700532 / DSM 15464 / FAM18).